A 217-amino-acid polypeptide reads, in one-letter code: tRNA (guanine-N(7)-)-methyltransferase (217 aa).

Glutamate 44, glutamate 69, aspartate 96, and aspartate 118 together coordinate S-adenosyl-L-methionine. The active site involves aspartate 118. Substrate is bound by residues lysine 122, aspartate 154, and 191–194; that span reads TEYE.

It belongs to the class I-like SAM-binding methyltransferase superfamily. TrmB family.

The enzyme catalyses guanosine(46) in tRNA + S-adenosyl-L-methionine = N(7)-methylguanosine(46) in tRNA + S-adenosyl-L-homocysteine. Its pathway is tRNA modification; N(7)-methylguanine-tRNA biosynthesis. Functionally, catalyzes the formation of N(7)-methylguanine at position 46 (m7G46) in tRNA. In Bacillus cereus (strain G9842), this protein is tRNA (guanine-N(7)-)-methyltransferase.